The primary structure comprises 85 residues: Large ribosomal subunit protein bL27 (85 aa).

The disordered stretch occupies residues 1–20; it reads MAHKKAGGSTRNGRDSEAKR.

It belongs to the bacterial ribosomal protein bL27 family.

This is Large ribosomal subunit protein bL27 from Escherichia coli O139:H28 (strain E24377A / ETEC).